Consider the following 317-residue polypeptide: MSADVPVTVAAVRAVARDVLALELRHANGQPLPGASAGAHIDLALPNGLVRQYSLVNATGQATMDCYQVAVGWDANSRGGSVWIHEKLKVGQALRVSAPRNLFEMAPEHRRVLLLAGGIGVTPIYAMAQACAQQGVDVELWASARSAPRLAYLEELKALLGQRLHLHADDEQGGPMNLTERLATQRWDAVYACGPAPMLDALTAATAHWAPGSVRMERFKGAEQPASERQPFELVLQRAGLSTTVDAHESVLDAMERVGVDFPWSCREGICGTCEAPVLEGEVQHLDYVLSPEERAEQRRMMVCVSRCGGGRLVLDI.

Residues 4–106 (DVPVTVAAVR…SAPRNLFEMA (103 aa)) enclose the FAD-binding FR-type domain. 110–220 (RRVLLLAGGI…PGSVRMERFK (111 aa)) serves as a coordination point for NAD(+). The 86-residue stretch at 232–317 (FELVLQRAGL…CGGGRLVLDI (86 aa)) folds into the 2Fe-2S ferredoxin-type domain. [2Fe-2S] cluster is bound by residues cysteine 266, cysteine 271, and cysteine 274.

As to quaternary structure, monomer. Part of the p-toluenesulfonate methyl-monooxygenase complex TsaBM, comprising the reductase TsaB and the oxygenase TsaM. FMN serves as cofactor.

Functionally, involved in the toluene-4-sulfonate degradation pathway. The polypeptide is Putative toluene-4-sulfonate monooxygenase system reductase subunit TsaB2 (tsaB2) (Comamonas testosteroni (Pseudomonas testosteroni)).